The sequence spans 705 residues: Phycobiliprotein ApcE (705 aa).

The tract at residues 18 to 76 is phycobilin-like 1; sequence QTVPGSTIVQAEQQDRFPQQGELRELSSYFQSGLKRLAIAEIITRNSDTIVSRAANRIF. The segment at 77–145 is phycobilin-like loop; the sequence is VGGSPLAYIE…VRIPSGFRPI (69 aa). A phycobilin-like 2 region spans residues 146 to 238; the sequence is NVARYGPRNM…YFDVLIREFE (93 aa). A (2R,3E)-phycocyanobilin-binding site is contributed by cysteine 196. PBS-linker domains lie at 253–433 and 514–691; these read DQQG…FVKV and KIFK…SLRP. Residues 685-705 are disordered; the sequence is VKASLRPAAGAQERRPEVGRR. The span at 696–705 shows a compositional bias: basic and acidic residues; the sequence is QERRPEVGRR.

The protein belongs to the phycobilisome linker protein family. In terms of assembly, phycobilisomes of this organism are composed of a two cylinder core, from which six rods radiate. The core is mainly composed of allophycocyanin alpha and beta chains, and of three minor components: the allophycocyanin alpha-B chain, a 18.3 kDa polypeptide, and the anchor polypeptide L-CM. In terms of processing, contains one covalently linked bilin chromophore. This protein autochromophorylates.

Its subcellular location is the cellular thylakoid membrane. In terms of biological role, this protein is postulated to act both as terminal energy acceptor (by its phycobilin-like domains) and as a linker polypeptide (by its repeats and arms) that stabilizes the phycobilisome core architecture. Has intrinsic bilin lyase activity. This Synechococcus sp. (strain ATCC 27144 / PCC 6301 / SAUG 1402/1) (Anacystis nidulans) protein is Phycobiliprotein ApcE (apcE).